The sequence spans 79 residues: Acyl carrier protein (79 aa).

The Carrier domain occupies 2-77 (STIEERVKKI…QAIDYVKSHV (76 aa)). Ser-37 carries the post-translational modification O-(pantetheine 4'-phosphoryl)serine.

It belongs to the acyl carrier protein (ACP) family. 4'-phosphopantetheine is transferred from CoA to a specific serine of apo-ACP by AcpS. This modification is essential for activity because fatty acids are bound in thioester linkage to the sulfhydryl of the prosthetic group.

The protein localises to the cytoplasm. It participates in lipid metabolism; fatty acid biosynthesis. Carrier of the growing fatty acid chain in fatty acid biosynthesis. This Xanthomonas oryzae pv. oryzae (strain MAFF 311018) protein is Acyl carrier protein.